The following is a 114-amino-acid chain: Ribonuclease P protein component (114 aa).

The protein belongs to the RnpA family. In terms of assembly, consists of a catalytic RNA component (M1 or rnpB) and a protein subunit.

It catalyses the reaction Endonucleolytic cleavage of RNA, removing 5'-extranucleotides from tRNA precursor.. Its function is as follows. RNaseP catalyzes the removal of the 5'-leader sequence from pre-tRNA to produce the mature 5'-terminus. It can also cleave other RNA substrates such as 4.5S RNA. The protein component plays an auxiliary but essential role in vivo by binding to the 5'-leader sequence and broadening the substrate specificity of the ribozyme. The polypeptide is Ribonuclease P protein component (Lactiplantibacillus plantarum (strain ATCC BAA-793 / NCIMB 8826 / WCFS1) (Lactobacillus plantarum)).